Reading from the N-terminus, the 661-residue chain is DNA ligase (661 aa).

Residues 31 to 35 (DKEYD), 79 to 80 (SL), and glutamate 112 each bind NAD(+). The active-site N6-AMP-lysine intermediate is the lysine 114. NAD(+)-binding residues include arginine 135, glutamate 169, lysine 281, and lysine 305. Positions 398, 401, 414, and 420 each coordinate Zn(2+). In terms of domain architecture, BRCT spans 578-661 (QQENIFLGKT…ISEAEFEAML (84 aa)).

Belongs to the NAD-dependent DNA ligase family. LigA subfamily. Mg(2+) is required as a cofactor. Mn(2+) serves as cofactor.

It catalyses the reaction NAD(+) + (deoxyribonucleotide)n-3'-hydroxyl + 5'-phospho-(deoxyribonucleotide)m = (deoxyribonucleotide)n+m + AMP + beta-nicotinamide D-nucleotide.. In terms of biological role, DNA ligase that catalyzes the formation of phosphodiester linkages between 5'-phosphoryl and 3'-hydroxyl groups in double-stranded DNA using NAD as a coenzyme and as the energy source for the reaction. It is essential for DNA replication and repair of damaged DNA. This chain is DNA ligase, found in Alkaliphilus oremlandii (strain OhILAs) (Clostridium oremlandii (strain OhILAs)).